We begin with the raw amino-acid sequence, 881 residues long: MAALSWQGIVAVTFTALAFVVMAADWVGPDITFTVLLAFLTAFDGQIVTVAKAAAGYGNTGLLTVVFLYWVAEGITQTGGLELIMNYVLGRSRSVHWALVRSMFPVMVLSAFLNNTPCVTFMIPILISWGRRCGVPIKKLLIPLSYAAVLGGTCTSIGTSTNLVIVGLQDARYAKSKQVDQAKFQIFDIAPYGVPYALWGFVFILLAQGFLLPGNSSRYAKDLLLAVRVLPSSSVVKKKLKDSGLLQQNGFDVTAIYRNGQLIKISDPSIVLDGGDILYVSGELDVVEFVGEEYGLALVNQEQELAAERPFGSGEEAVFSANGAAPYHKLVQAKLSKTSDLIGRTVREVSWQGRFGLIPVAIQRGNGREDGRLSDVVLAAGDVLLLDTTPFYDEDREDIKTNFDGKLHAVKDGAAKEFVIGVKVKKSAEVVGKTVSAAGLRGIPGLFVLSVDHADGTSVDSSDYLYKIQPDDTIWIAADVAAVGFLSKFPGLELVQQEQVDKTGTSILYRHLVQAAVSHKGPLVGKTVRDVRFRTLYNAAVVAVHRENARIPLKVQDIVLQGGDVLLISCHTNWADEHRHDKSFVLVQPVPDSSPPKRSRMIIGVLLATGMVLTQIIGGLKNKEYIHLWPCAVLTAALMLLTGCMNADQTRKAIMWDVYLTIAAAFGVSAALEGTGVAAKFANAIISIGKGAGGTGAALIAIYIATALLSELLTNNAAGAIMYPIAAIAGDALKITPKDTSVAIMLGASAGFVNPFSYQTNLMVYAAGNYSVREFAIVGAPFQVWLMIVAGFILVYRNQWHQVWIVSWICTAGIVLLPALYFLLPTRIQIKIDGFFERIAAVLNPKAALERRRSLRRQVSHTRTDDSGSSGSPLPAPKIVA.

Transmembrane regions (helical) follow at residues 8–28, 31–51, 61–81, 107–127, 140–160, and 186–206; these read GIVA…DWVG, ITFT…VTVA, GLLT…TGGL, MVLS…PILI, LLIP…IGTS, and IFDI…FILL. RCK C-terminal domains are found at residues 212–296, 318–402, 407–492, and 498–584; these read LPGN…EYGL, VFSA…IKTN, LHAV…FPGL, and EQVD…DKSF. 6 helical membrane-spanning segments follow: residues 601-621, 625-645, 658-678, 684-704, 775-795, and 803-823; these read MIIG…GGLK, YIHL…TGCM, VYLT…TGVA, AIIS…AIYI, FAIV…FILV, and VWIV…LYFL. The tract at residues 854 to 881 is disordered; that stretch reads SLRRQVSHTRTDDSGSSGSPLPAPKIVA.

The protein belongs to the divalent anion:Na+ symporter (DASS) superfamily. Na+/sulfate symporter (TC 2.A.47.4) family.

The protein localises to the cell membrane. Its function is as follows. Na(+)/sulfate cotransporter with a probable high-affinity for sulfate and a proteasome dependent turnover. The chain is Sodium/sulfate cotransporter 1 (SLT1) from Chlamydomonas reinhardtii (Chlamydomonas smithii).